The sequence spans 505 residues: Glutamate--cysteine ligase (505 aa).

This sequence belongs to the glutamate--cysteine ligase type 1 family. Type 1 subfamily.

The catalysed reaction is L-cysteine + L-glutamate + ATP = gamma-L-glutamyl-L-cysteine + ADP + phosphate + H(+). It functions in the pathway sulfur metabolism; glutathione biosynthesis; glutathione from L-cysteine and L-glutamate: step 1/2. This is Glutamate--cysteine ligase from Wigglesworthia glossinidia brevipalpis.